The following is a 100-amino-acid chain: Putative membrane protein insertion efficiency factor (100 aa).

It belongs to the UPF0161 family.

It is found in the cell membrane. Functionally, could be involved in insertion of integral membrane proteins into the membrane. This Enterococcus faecalis (strain ATCC 700802 / V583) protein is Putative membrane protein insertion efficiency factor.